The chain runs to 314 residues: Malate dehydrogenase (314 aa).

Residues 11–16 (GSGNIG) and Asp35 contribute to the NAD(+) site. Arg84 and Arg90 together coordinate substrate. Residues Asn97 and 120-122 (ITN) each bind NAD(+). Substrate-binding residues include Asn122 and Arg153. His177 functions as the Proton acceptor in the catalytic mechanism.

It belongs to the LDH/MDH superfamily. MDH type 3 family.

It carries out the reaction (S)-malate + NAD(+) = oxaloacetate + NADH + H(+). In terms of biological role, catalyzes the reversible oxidation of malate to oxaloacetate. The protein is Malate dehydrogenase of Rickettsia felis (strain ATCC VR-1525 / URRWXCal2) (Rickettsia azadi).